A 305-amino-acid polypeptide reads, in one-letter code: MANGEIISGFIAPHPPHLVYGENPPQNEPKSTGGWEQLRWAYERARASIEELKPDVLLVHSPHWITSVGHHFIGVDHLQGRSVDPIFPNLFRFDYSINFDVELSEACCEEGRKAGLVTKMMRNPRFRPDYGTITTLHMIRPQWDIPVVSISANNTPYYLSMEEGLGEMDVLGKATREAILKSGKRAVLLASNTLSHWHFHEEPVPPEDMSKEHPQTKIGYEWDMRMIELMRQGRMEEVFQLLPQFIEEAFAEVKSGAFTWMHAAMQYPNLPAELHGYGTVIGTGNAVVEWNLVKAGLARVAGKAA.

Positions 14, 63, and 196 each coordinate Fe cation.

It belongs to the LigB/MhpB extradiol dioxygenase family. As to quaternary structure, heterotetramer of 2 alpha and 2 beta subunits. Fe(2+) is required as a cofactor.

The enzyme catalyses 2-aminophenol + O2 = 2-aminomuconate 6-semialdehyde. Its activity is regulated as follows. Strongly inhibited by CuSO(4), FeCl(3), K(3)[Fe(CN)(6)], AgNO3, HgCl(2) and MnCl(2). Component of the 2-aminophenol 1,6-dioxygenase complex that catalyzes the ring fission of 2-aminophenol to produce 2-aminomuconic 6-semialdehyde. AmnB seems to be the catalytic subunit of the complex. The enzyme is also active toward 2-amino-p-cresol, 6-amino-m-cresol, 2-amino-m-cresol, 2-amino-4,5-dimethylphenol, 2-amino-4-chlorophenol, and catechol. The chain is 2-aminophenol 1,6-dioxygenase beta subunit (amnB) from Pseudomonas sp.